Reading from the N-terminus, the 1240-residue chain is DNA polymerase II large subunit (1240 aa).

The protein belongs to the archaeal DNA polymerase II family. Heterodimer of a large subunit and a small subunit.

The enzyme catalyses DNA(n) + a 2'-deoxyribonucleoside 5'-triphosphate = DNA(n+1) + diphosphate. The catalysed reaction is Exonucleolytic cleavage in the 3'- to 5'-direction to yield nucleoside 5'-phosphates.. Functionally, possesses two activities: a DNA synthesis (polymerase) and an exonucleolytic activity that degrades single-stranded DNA in the 3'- to 5'-direction. Has a template-primer preference which is characteristic of a replicative DNA polymerase. The sequence is that of DNA polymerase II large subunit from Methanopyrus kandleri (strain AV19 / DSM 6324 / JCM 9639 / NBRC 100938).